Here is a 790-residue protein sequence, read N- to C-terminus: Ribonucleoside-diphosphate reductase large subunit (790 aa).

Substrate-binding positions include Thr208, 223-224, Gly254, 436-440, and 621-625; these read SC, NLCTE, and PTVSS. An intrachain disulfide couples Cys224 to Cys453. Residue Asn436 is the Proton acceptor of the active site. Catalysis depends on Cys438, which acts as the Cysteine radical intermediate. The Proton acceptor role is filled by Glu440.

This sequence belongs to the ribonucleoside diphosphate reductase large chain family. As to quaternary structure, heterotetramer composed of a homodimer of the large subunit (R1) and a homodimer of the small subunit (R2). Larger multisubunit protein complex are also active, composed of (R1)n(R2)n.

It carries out the reaction a 2'-deoxyribonucleoside 5'-diphosphate + [thioredoxin]-disulfide + H2O = a ribonucleoside 5'-diphosphate + [thioredoxin]-dithiol. In terms of biological role, ribonucleoside-diphosphate reductase holoenzyme provides the precursors necessary for viral DNA synthesis. Allows virus growth in non-dividing cells, as well as reactivation from latency in infected hosts. Catalyzes the biosynthesis of deoxyribonucleotides from the corresponding ribonucleotides. The polypeptide is Ribonucleoside-diphosphate reductase large subunit (Equus caballus (Horse)).